The chain runs to 594 residues: Proteasome-associated ATPase (594 aa).

Residues 1–12 (MTETSANKPENT) are compositionally biased toward polar residues. Positions 1–20 (MTETSANKPENTQAHEGRDY) are disordered. Positions 18–71 (RDYSVLERQFNVLRDKLRNVDRQLAAATQNNTKMTTTLQSAKAEILRLKSALEK) form a coiled coil. An ATP-binding site is contributed by 282–287 (GCGKTL). A docks into pockets in the proteasome alpha-ring region spans residues 593–594 (YL).

The protein belongs to the AAA ATPase family. Homohexamer. Assembles into a hexameric ring structure that caps the 20S proteasome core. Strongly interacts with the prokaryotic ubiquitin-like protein Pup through a hydrophobic interface; the interacting region of ARC lies in its N-terminal coiled-coil domain. There is one Pup binding site per ARC hexamer ring. Upon ATP-binding, the C-terminus of ARC interacts with the alpha-rings of the proteasome core, possibly by binding to the intersubunit pockets.

It functions in the pathway protein degradation; proteasomal Pup-dependent pathway. In terms of biological role, ATPase which is responsible for recognizing, binding, unfolding and translocation of pupylated proteins into the bacterial 20S proteasome core particle. May be essential for opening the gate of the 20S proteasome via an interaction with its C-terminus, thereby allowing substrate entry and access to the site of proteolysis. Thus, the C-termini of the proteasomal ATPase may function like a 'key in a lock' to induce gate opening and therefore regulate proteolysis. This chain is Proteasome-associated ATPase, found in Renibacterium salmoninarum (strain ATCC 33209 / DSM 20767 / JCM 11484 / NBRC 15589 / NCIMB 2235).